A 340-amino-acid polypeptide reads, in one-letter code: Ribonucleoside-diphosphate reductase small subunit (340 aa).

A helical transmembrane segment spans residues 180–200; it reads FILMILIEGIFFAASFAAIAY.

It belongs to the ribonucleoside diphosphate reductase small chain family. Heterotetramer composed of a homodimer of the large subunit (R1) and a homodimer of the small subunit (R2). Larger multisubunit protein complex are also active, composed of (R1)n(R2)n. Fe cation is required as a cofactor.

The protein resides in the host membrane. It carries out the reaction a 2'-deoxyribonucleoside 5'-diphosphate + [thioredoxin]-disulfide + H2O = a ribonucleoside 5'-diphosphate + [thioredoxin]-dithiol. Functionally, ribonucleoside-diphosphate reductase holoenzyme provides the precursors necessary for viral DNA synthesis. Allows virus growth in non-dividing cells, as well as reactivation from latency in infected hosts. Catalyzes the biosynthesis of deoxyribonucleotides from the corresponding ribonucleotides. The chain is Ribonucleoside-diphosphate reductase small subunit from Human herpesvirus 1 (strain 17) (HHV-1).